The primary structure comprises 272 residues: S-adenosylmethionine decarboxylase proenzyme (272 aa).

Residue S117 is the Schiff-base intermediate with substrate; via pyruvic acid of the active site. S117 carries the pyruvic acid (Ser); by autocatalysis modification. The active-site Proton acceptor; for processing activity is H122. The active-site Proton donor; for catalytic activity is the C145.

Belongs to the prokaryotic AdoMetDC family. Type 2 subfamily. Heterooctamer of four alpha and four beta chains arranged as a tetramer of alpha/beta heterodimers. Pyruvate serves as cofactor. In terms of processing, is synthesized initially as an inactive proenzyme. Formation of the active enzyme involves a self-maturation process in which the active site pyruvoyl group is generated from an internal serine residue via an autocatalytic post-translational modification. Two non-identical subunits are generated from the proenzyme in this reaction, and the pyruvate is formed at the N-terminus of the alpha chain, which is derived from the carboxyl end of the proenzyme. The post-translation cleavage follows an unusual pathway, termed non-hydrolytic serinolysis, in which the side chain hydroxyl group of the serine supplies its oxygen atom to form the C-terminus of the beta chain, while the remainder of the serine residue undergoes an oxidative deamination to produce ammonia and the pyruvoyl group blocking the N-terminus of the alpha chain.

It catalyses the reaction S-adenosyl-L-methionine + H(+) = S-adenosyl 3-(methylsulfanyl)propylamine + CO2. The protein operates within amine and polyamine biosynthesis; S-adenosylmethioninamine biosynthesis; S-adenosylmethioninamine from S-adenosyl-L-methionine: step 1/1. In terms of biological role, catalyzes the decarboxylation of S-adenosylmethionine to S-adenosylmethioninamine (dcAdoMet), the propylamine donor required for the synthesis of the polyamines spermine and spermidine from the diamine putrescine. The polypeptide is S-adenosylmethionine decarboxylase proenzyme (Halorhodospira halophila (strain DSM 244 / SL1) (Ectothiorhodospira halophila (strain DSM 244 / SL1))).